We begin with the raw amino-acid sequence, 94 residues long: RxLR effector protein PITG_15972 (94 aa).

A signal peptide spans 1 to 21 (MRAVYILAMACAATLQASSSA). The RxLR-dEER signature appears at 50 to 65 (RLLRVEDKEEETEEER).

This sequence belongs to the RxLR effector family.

It is found in the secreted. Its subcellular location is the host cytoplasm. The protein localises to the host nucleus. Functionally, effector that enhances P.infestans colonization of Nicotiana benthamiana leaves. The polypeptide is RxLR effector protein PITG_15972 (Phytophthora infestans (strain T30-4) (Potato late blight agent)).